We begin with the raw amino-acid sequence, 685 residues long: ATP-dependent zinc metalloprotease FTSH 8, chloroplastic (685 aa).

A chloroplast-targeting transit peptide spans 1–37 (MAASSACLLGNGLSVYTTKQRFQKLGLDRTSKVTVVK). The transit peptide at 38 to 73 (ASLDEKKHEGRRGFFKLLLGNAAAGVGLLASGNANA) directs the protein to the thylakoid. Over 38 to 161 (ASLDEKKHEG…HNAQEDQGSP (124 aa)) the chain is Lumenal, thylakoid. Residues 162–182 (ILNLIGNLAFPVILIGGLFLL) form a helical membrane-spanning segment. The Stromal segment spans residues 183–685 (SRRSSGGMGG…STSTPTPASV (503 aa)). An ATP-binding site is contributed by 260-267 (GPPGTGKT). His-481 contributes to the Zn(2+) binding site. Glu-482 is an active-site residue. His-485 and Asp-559 together coordinate Zn(2+).

In the N-terminal section; belongs to the AAA ATPase family. This sequence in the C-terminal section; belongs to the peptidase M41 family. Heterohexamers with FTSH1, FTSH2 and FTSH5. May also form homooligomers. The cofactor is Zn(2+). Expressed in cotyledons, cauline and rosette leaves, stems, sepals, flovers and siliques. Very low in roots.

It localises to the plastid. It is found in the chloroplast thylakoid membrane. Its function is as follows. Part of a complex that function as an ATP-dependent zinc metallopeptidase. Involved in the thylakoid formation and in the removal of damaged D1 in the photosystem II, preventing cell death under high-intensity light conditions. This Arabidopsis thaliana (Mouse-ear cress) protein is ATP-dependent zinc metalloprotease FTSH 8, chloroplastic (FTSH8).